Here is a 155-residue protein sequence, read N- to C-terminus: Ribosomal RNA large subunit methyltransferase H (155 aa).

Residues leucine 72, glycine 103, and leucine 122–leucine 127 each bind S-adenosyl-L-methionine.

Belongs to the RNA methyltransferase RlmH family. Homodimer.

The protein localises to the cytoplasm. It carries out the reaction pseudouridine(1915) in 23S rRNA + S-adenosyl-L-methionine = N(3)-methylpseudouridine(1915) in 23S rRNA + S-adenosyl-L-homocysteine + H(+). Functionally, specifically methylates the pseudouridine at position 1915 (m3Psi1915) in 23S rRNA. The chain is Ribosomal RNA large subunit methyltransferase H from Haemophilus ducreyi (strain 35000HP / ATCC 700724).